A 599-amino-acid chain; its full sequence is Sodium-dependent phosphate transport protein 2C (599 aa).

At 1–76 the chain is on the cytoplasmic side; sequence MPSSLPGSQV…RRVAGSVLKA (76 aa). S4 carries the post-translational modification Phosphoserine. The helical transmembrane segment at 77 to 97 threads the bilayer; sequence CGLLGSLYFFICSLDVLSSAF. The Extracellular portion of the chain corresponds to 98–111; sequence QLLGSKVAGDIFKD. A helical transmembrane segment spans residues 112–132; the sequence is NVVLSNPVAGLVIGVLVTALV. At 133–188 the chain is on the cytoplasmic side; sequence QSSSTSSSIVVSMVAAKLLTVRVSVPIIMGVNVGTSITSTLVSMAQSGDRDEFQRA. The helical transmembrane segment at 189–209 threads the bilayer; the sequence is FSGSAVHGIFNWLTVLVLLPL. Residues 210 to 322 are Extracellular-facing; that stretch reads ESATALLERL…FAGTELTDLA (113 aa). N-linked (GlcNAc...) asparagine glycans are attached at residues N265, N268, N286, and N299. Residues C276 and C309 are joined by a disulfide bond. The chain crosses the membrane as a helical span at residues 323-343; it reads VGCILLAGSLLVLCGCLVLIV. At 344–367 the chain is on the cytoplasmic side; sequence KLLNSVLRGRVAQVVRTVINADFP. The chain crosses the membrane as a helical span at residues 368 to 388; that stretch reads FPLGWLGGYLAVLAGAGLTFA. Over 389–445 the chain is Extracellular; sequence LQSSSVFTAAVVPLMGVGVISLDRAYPLLLGSNIGTTTTALLAALASPADRMLSALQ. Residues 446 to 466 form a helical membrane-spanning segment; it reads VALIHFFFNLAGILLWYLVPA. Residues 467-485 lie on the Cytoplasmic side of the membrane; sequence LRLPIPLARHFGVVTARYR. Residues 486 to 506 traverse the membrane as a helical segment; it reads WVAGVYLLLGFLLLPLAAFGL. Over 507 to 510 the chain is Extracellular; it reads SLAG. A helical transmembrane segment spans residues 511–531; that stretch reads GMELAAVGGPLVGLVLLVILV. At 532-599 the chain is on the cytoplasmic side; sequence TVLQRRRPAW…NPEILASQQL (68 aa).

The protein belongs to the SLC34A transporter family. Expressed only in the kidney.

The protein resides in the apical cell membrane. It carries out the reaction 2 Na(+)(out) + phosphate(out) = 2 Na(+)(in) + phosphate(in). Its function is as follows. Involved in actively transporting phosphate into cells via Na(+) cotransport in the renal brush border membrane. The cotransport has a Na(+):Pi stoichiometry of 2:1 and is electroneutral. In Homo sapiens (Human), this protein is Sodium-dependent phosphate transport protein 2C (SLC34A3).